Here is a 247-residue protein sequence, read N- to C-terminus: tRNA pseudouridine synthase A (247 aa).

The Nucleophile role is filled by aspartate 53. Tyrosine 111 contributes to the substrate binding site.

Belongs to the tRNA pseudouridine synthase TruA family. Homodimer.

The enzyme catalyses uridine(38/39/40) in tRNA = pseudouridine(38/39/40) in tRNA. Functionally, formation of pseudouridine at positions 38, 39 and 40 in the anticodon stem and loop of transfer RNAs. This is tRNA pseudouridine synthase A from Bacillus velezensis (strain DSM 23117 / BGSC 10A6 / LMG 26770 / FZB42) (Bacillus amyloliquefaciens subsp. plantarum).